Reading from the N-terminus, the 234-residue chain is GTP-binding protein YPT52 (234 aa).

GTP is bound by residues 10–17 (GDSSVGKS), 66–70 (DTAGQ), and 111–114 (NKVG). Disordered regions lie at residues 131–151 (QETP…EEQK) and 206–234 (NRQI…SCCS). A compositionally biased stretch (polar residues) spans 132–142 (ETPSTETSPDS). S139 and S142 each carry phosphoserine. A Glycyl lysine isopeptide (Lys-Gly) (interchain with G-Cter in ubiquitin) cross-link involves residue K151. Residues 217-234 (VDINLQRPSTNDPTSCCS) are compositionally biased toward polar residues. Residues C232 and C233 are each lipidated (S-geranylgeranyl cysteine).

This sequence belongs to the small GTPase superfamily. Rab family. As to quaternary structure, interacts with ROY1, YIF1, YIP3, YIP4 and YIP5.

The protein localises to the cell membrane. It localises to the endoplasmic reticulum. Its function is as follows. Required for transport in the endocytic pathway and for correct sorting of the vacuolar hydrolases suggesting a possible intersection of the endocytic with the vacuolar sorting pathway. May be involved in recruiting the MON1-CCZ1 complex to membranes enriched in phosphatidylinositol 3-phosphate (PtdIns[3]P) or other charged lipids, leading to recruitment of YPT7. The sequence is that of GTP-binding protein YPT52 (YPT52) from Saccharomyces cerevisiae (strain ATCC 204508 / S288c) (Baker's yeast).